Reading from the N-terminus, the 353-residue chain is Alcohol dehydrogenase 1 (353 aa).

7 residues coordinate Zn(2+): cysteine 47, histidine 70, cysteine 101, cysteine 104, cysteine 107, cysteine 115, and cysteine 157. NAD(+)-binding positions include 181 to 187, aspartate 205, lysine 210, 274 to 276, and arginine 346; these read GAGGGLG and IGL.

It belongs to the zinc-containing alcohol dehydrogenase family. In terms of assembly, homotetramer. Requires Zn(2+) as cofactor.

It is found in the cytoplasm. It catalyses the reaction a primary alcohol + NAD(+) = an aldehyde + NADH + H(+). It carries out the reaction a secondary alcohol + NAD(+) = a ketone + NADH + H(+). The protein is Alcohol dehydrogenase 1 (adh-1) of Neurospora crassa (strain ATCC 24698 / 74-OR23-1A / CBS 708.71 / DSM 1257 / FGSC 987).